Here is a 313-residue protein sequence, read N- to C-terminus: tRNA dimethylallyltransferase (313 aa).

Residue 11-18 participates in ATP binding; that stretch reads GPTAGGKT. 13-18 serves as a coordination point for substrate; sequence TAGGKT. Interaction with substrate tRNA regions lie at residues 36–39, 160–164, and 243–248; these read DSAL, QRIGR, and RCVGYR.

Belongs to the IPP transferase family. In terms of assembly, monomer. It depends on Mg(2+) as a cofactor.

It catalyses the reaction adenosine(37) in tRNA + dimethylallyl diphosphate = N(6)-dimethylallyladenosine(37) in tRNA + diphosphate. Catalyzes the transfer of a dimethylallyl group onto the adenine at position 37 in tRNAs that read codons beginning with uridine, leading to the formation of N6-(dimethylallyl)adenosine (i(6)A). The protein is tRNA dimethylallyltransferase of Neisseria meningitidis serogroup C / serotype 2a (strain ATCC 700532 / DSM 15464 / FAM18).